We begin with the raw amino-acid sequence, 340 residues long: ATPase get3 (340 aa).

Residue 34–41 coordinates ATP; the sequence is KGGVGKTT. Residue D63 is part of the active site. Positions 242 and 269 each coordinate ATP. The Zn(2+) site is built by C280 and C283.

The protein belongs to the arsA ATPase family. Homodimer.

It is found in the cytoplasm. It localises to the endoplasmic reticulum. Functionally, ATPase required for the post-translational delivery of tail-anchored (TA) proteins to the endoplasmic reticulum. Recognizes and selectively binds the transmembrane domain of TA proteins in the cytosol. This complex then targets to the endoplasmic reticulum by membrane-bound receptors, where the tail-anchored protein is released for insertion. This process is regulated by ATP binding and hydrolysis. ATP binding drives the homodimer towards the closed dimer state, facilitating recognition of newly synthesized TA membrane proteins. ATP hydrolysis is required for insertion. Subsequently, the homodimer reverts towards the open dimer state, lowering its affinity for the membrane-bound receptor, and returning it to the cytosol to initiate a new round of targeting. This chain is ATPase get3 (get3), found in Sclerotinia sclerotiorum (strain ATCC 18683 / 1980 / Ss-1) (White mold).